The following is a 639-amino-acid chain: Protein argonaute (639 aa).

Residues 1–100 (MYLNLYKIDI…YIKKLFLDND (100 aa)) are N-terminal domain. The interval 101–153 (FYFKKGNNFISNSEVFSLDSNENVNAHLTYKIKIHNISNEYYLSILPKFTFLS) is linker L1. Positions 154 to 209 (KEPALESAIKSGYLYNIKSGKSFPYISGLDGILKIDIGNNQIVEVAYPENYLFNFT) are PAZ domain. The segment at 210–292 (TRDAEKYGFS…KYSFYKNEQP (83 aa)) is linker L2. Residues 293-424 (LKAIFFFSSK…YVYKMGNFIP (132 aa)) are mid domain. Residues 425–639 (ECKPFILKKM…DYEWKLYIPY (215 aa)) form a PIWI domain region. Active-site residues include aspartate 446, glutamate 482, aspartate 516, and asparagine 624. Residue aspartate 446 participates in Mn(2+) binding. Mn(2+) is bound by residues aspartate 516 and asparagine 624.

It belongs to the argonaute family. Long pAgo subfamily. Requires Mn(2+) as cofactor.

The protein resides in the cytoplasm. An RNA-guided ssDNA endonuclease that may play a role in defense against invading mobile genetic elements. Uses short 5'-OH-ssRNA sequences as guides (gRNA) to bind complementary target DNA (tDNA) or target RNA resulting in target cleavage. The cleavage site is 10 nucleotides (nt) downstream of the target residue base-paired with the 5'-end of the gRNA. Reaction rates are fastest on 5'-OH-gRNA:tDNA followed by 5'-OH-gRNA:target RNA. gRNA between 17-21 nt supports equivalent rates of cleavage, has no preferred 5'-nt. Has weak activity on tDNA with 5'-phospho-gRNA, yielding products 1-2 nt longer. Unlike other characterized prokaryotic Ago proteins symmetric mismatches centered around the cleavage site reduce cleavage efficiency. The chain is Protein argonaute from Marinitoga piezophila (strain DSM 14283 / JCM 11233 / KA3).